Reading from the N-terminus, the 321-residue chain is L-carnitine dehydrogenase (321 aa).

14 to 19 (GSGVIG) provides a ligand contact to NAD(+).

Belongs to the 3-hydroxyacyl-CoA dehydrogenase family. L-carnitine dehydrogenase subfamily. As to quaternary structure, homodimer.

The protein localises to the cytoplasm. The catalysed reaction is carnitine + NAD(+) = 3-dehydrocarnitine + NADH + H(+). The protein operates within amine and polyamine metabolism; carnitine metabolism. Its activity is regulated as follows. Analogs of L-carnitine such as D-carnitine, glycine betaine and choline, are competitive inhibitors of L-carnitine oxidation. Catalyzes the NAD(+)-dependent oxidation of L-carnitine to 3-dehydrocarnitine. Is specific for L-carnitine and NAD(+) as substrates. D,L-3-hydroxybutyrate, L-lactate, ethanol, L-malate and D,L-isocitrate are not substrates. Is involved in a L-carnitine degradation pathway that allows P.aeruginosa to grow on L-carnitine as the sole source of carbon and nitrogen. The chain is L-carnitine dehydrogenase from Pseudomonas aeruginosa (strain ATCC 15692 / DSM 22644 / CIP 104116 / JCM 14847 / LMG 12228 / 1C / PRS 101 / PAO1).